The sequence spans 225 residues: uncharacterized protein (225 aa).

This is an uncharacterized protein from Mycoplasma genitalium (strain ATCC 33530 / DSM 19775 / NCTC 10195 / G37) (Mycoplasmoides genitalium).